We begin with the raw amino-acid sequence, 167 residues long: Putative universal stress protein SSP1056 (167 aa).

This sequence belongs to the universal stress protein A family.

It is found in the cytoplasm. The chain is Putative universal stress protein SSP1056 from Staphylococcus saprophyticus subsp. saprophyticus (strain ATCC 15305 / DSM 20229 / NCIMB 8711 / NCTC 7292 / S-41).